The primary structure comprises 244 residues: Glucosamine-6-phosphate deaminase (244 aa).

The Proton acceptor; for enolization step role is filled by Asp67. Residue Asn136 is the For ring-opening step of the active site. His138 serves as the catalytic Proton acceptor; for ring-opening step. The For ring-opening step role is filled by Glu143.

Belongs to the glucosamine/galactosamine-6-phosphate isomerase family. NagB subfamily.

It catalyses the reaction alpha-D-glucosamine 6-phosphate + H2O = beta-D-fructose 6-phosphate + NH4(+). Its pathway is amino-sugar metabolism; N-acetylneuraminate degradation; D-fructose 6-phosphate from N-acetylneuraminate: step 5/5. Its function is as follows. Catalyzes the reversible isomerization-deamination of glucosamine 6-phosphate (GlcN6P) to form fructose 6-phosphate (Fru6P) and ammonium ion. In Clostridium botulinum (strain 657 / Type Ba4), this protein is Glucosamine-6-phosphate deaminase.